The sequence spans 156 residues: Small ribosomal subunit protein uS7c (156 aa).

Belongs to the universal ribosomal protein uS7 family. Part of the 30S ribosomal subunit.

The protein localises to the plastid. Its function is as follows. One of the primary rRNA binding proteins, it binds directly to 16S rRNA where it nucleates assembly of the head domain of the 30S subunit. This is Small ribosomal subunit protein uS7c (rps7) from Prototheca wickerhamii.